We begin with the raw amino-acid sequence, 118 residues long: Vitelline membrane protein Vm32E (118 aa).

The first 17 residues, 1 to 17, serve as a signal peptide directing secretion; the sequence is MKIVALTLVAFVALAGA. One can recognise a VM domain in the interval 36–75; that stretch reads GYPAPPCPTNYLFSCQPNLAPAPCAQEAQAPAYGSAGAYT.

This sequence belongs to the vitelline membrane family.

The protein localises to the secreted. Functionally, major early eggshell protein. In Drosophila mauritiana (Fruit fly), this protein is Vitelline membrane protein Vm32E.